A 384-amino-acid chain; its full sequence is MTPISQTPGLLAEAMVDLGAIEHNVRVLREHAGHAQLMAVVKADGYGHGATRVAQTALGAGAAELGVATVDEALALRADGITAPVLAWLHPPGIDFGPALLADVQVAVSSLRQLDELLHAVRRTGRTATVTVKVDTGLNRNGVGPAQFPAMLTALRQAMAEDAVRLRGLMSHMVYADKPDDSINDVQAQRFTAFLAQAREQGVRFEVAHLSNSSATMARPDLTFDLVRPGIAVYGLSPVPALGDMGLVPAMTVKCAVALVKSIRAGEGVSYGHTWIAPRDTNLALLPIGYADGVFRSLGGRLEVLINGRRCPGVGRICMDQFMVDLGPGPLDVAEGDEAILFGPGIRGEPTAQDWADLVGTIHYEVVTSPRGRITRTYREAENR.

Lysine 42 functions as the Proton acceptor; specific for D-alanine in the catalytic mechanism. Lysine 42 bears the N6-(pyridoxal phosphate)lysine mark. Arginine 140 serves as a coordination point for substrate. Tyrosine 271 (proton acceptor; specific for L-alanine) is an active-site residue. A substrate-binding site is contributed by methionine 319.

Belongs to the alanine racemase family. In terms of assembly, homodimer. It depends on pyridoxal 5'-phosphate as a cofactor.

The enzyme catalyses L-alanine = D-alanine. The protein operates within amino-acid biosynthesis; D-alanine biosynthesis; D-alanine from L-alanine: step 1/1. Functionally, catalyzes the interconversion of L-alanine and D-alanine. The sequence is that of Alanine racemase (alr) from Mycobacterium tuberculosis (strain CDC 1551 / Oshkosh).